Consider the following 182-residue polypeptide: Dual-action ribosomal maturation protein DarP (182 aa).

A disordered region spans residues 1-20 (MNKQPEEWQDPQSLQQQDDE).

Belongs to the DarP family.

It is found in the cytoplasm. Its function is as follows. Member of a network of 50S ribosomal subunit biogenesis factors which assembles along the 30S-50S interface, preventing incorrect 23S rRNA structures from forming. Promotes peptidyl transferase center (PTC) maturation. The sequence is that of Dual-action ribosomal maturation protein DarP from Sodalis glossinidius (strain morsitans).